Reading from the N-terminus, the 96-residue chain is Large ribosomal subunit protein uL23 (96 aa).

It belongs to the universal ribosomal protein uL23 family. In terms of assembly, part of the 50S ribosomal subunit. Contacts protein L29, and trigger factor when it is bound to the ribosome.

Functionally, one of the early assembly proteins it binds 23S rRNA. One of the proteins that surrounds the polypeptide exit tunnel on the outside of the ribosome. Forms the main docking site for trigger factor binding to the ribosome. The polypeptide is Large ribosomal subunit protein uL23 (Clostridioides difficile (strain 630) (Peptoclostridium difficile)).